The sequence spans 148 residues: 3-dehydroquinate dehydratase (148 aa).

The active-site Proton acceptor is Y23. The substrate site is built by N74, H80, and D87. The active-site Proton donor is H100. Residues 101 to 102 (IS) and R111 contribute to the substrate site.

It belongs to the type-II 3-dehydroquinase family. Homododecamer.

The catalysed reaction is 3-dehydroquinate = 3-dehydroshikimate + H2O. The protein operates within metabolic intermediate biosynthesis; chorismate biosynthesis; chorismate from D-erythrose 4-phosphate and phosphoenolpyruvate: step 3/7. In terms of biological role, catalyzes a trans-dehydration via an enolate intermediate. In Caldanaerobacter subterraneus subsp. tengcongensis (strain DSM 15242 / JCM 11007 / NBRC 100824 / MB4) (Thermoanaerobacter tengcongensis), this protein is 3-dehydroquinate dehydratase.